We begin with the raw amino-acid sequence, 73 residues long: DNA-directed RNA polymerase subunit epsilon (73 aa).

Belongs to the RNA polymerase subunit epsilon family. RNAP is composed of a core of 2 alpha, a beta and a beta' subunit. The core is associated with a delta subunit, and at least one of epsilon or omega. When a sigma factor is associated with the core the holoenzyme is formed, which can initiate transcription.

The catalysed reaction is RNA(n) + a ribonucleoside 5'-triphosphate = RNA(n+1) + diphosphate. Functionally, a non-essential component of RNA polymerase (RNAP). The chain is DNA-directed RNA polymerase subunit epsilon from Lactobacillus acidophilus (strain ATCC 700396 / NCK56 / N2 / NCFM).